We begin with the raw amino-acid sequence, 281 residues long: Cell growth regulator with EF hand domain protein 1 (281 aa).

A signal peptide spans 1 to 21; sequence MSRWLMQMLMLPLLLLPLGQA. EF-hand domains follow at residues 71 to 106 and 115 to 150; these read NREQVLLYLFALHDFDQNGQLDGLELLSMLTAALAP and PVILVVDMVLETQDLDGDGLMTPAELINFPGEAPKR. The Ca(2+) site is built by Asp84, Asp86, Asn88, Gln90, Glu95, Asp128, Asp130, Asp132, and Glu139. The disordered stretch occupies residues 146-281; the sequence is EAPKRAESLP…HSIQLENDEI (136 aa). Positions 169-184 are enriched in polar residues; that stretch reads LLANSPLQSETQQSLG. Residues 185 to 213 show a composition bias toward basic and acidic residues; that stretch reads TKEEITSQVEAKRALEPEQEAGHHIETKV. A phosphoserine mark is found at Ser217 and Ser228. Residues 234–256 are compositionally biased toward basic and acidic residues; it reads GPREDAERQVESKDNEGEAKDLP.

In terms of processing, probably digested extracellularly by an unknown serine protease generating extremely hydrophobic bioactive peptides. In terms of tissue distribution, expressed predominantly in whole brain and kidney, with limited expression in heart, lung, liver, and skeletal muscle and no expression in spleen and testis. Also expressed in pituitary gland, adrenal gland, digestive tract, and reproductive organs.

The protein localises to the secreted. Its function is as follows. Mediates cell-cell adhesion in a calcium-dependent manner. Able to inhibit growth in several cell lines. This Rattus norvegicus (Rat) protein is Cell growth regulator with EF hand domain protein 1.